The primary structure comprises 259 residues: 14-3-3-like protein GF14 omega (259 aa).

A phosphoserine mark is found at serine 67, serine 109, and serine 190. Threonine 211 carries the post-translational modification Phosphothreonine.

It belongs to the 14-3-3 family. As to quaternary structure, interacts with CINV1.

The protein localises to the nucleus. It is found in the cytoplasm. Is associated with a DNA binding complex that binds to the G box, a well-characterized cis-acting DNA regulatory element found in plant genes. In Arabidopsis thaliana (Mouse-ear cress), this protein is 14-3-3-like protein GF14 omega (GRF2).